A 138-amino-acid polypeptide reads, in one-letter code: Transcription antitermination protein NusB (138 aa).

Belongs to the NusB family.

Its function is as follows. Involved in transcription antitermination. Required for transcription of ribosomal RNA (rRNA) genes. Binds specifically to the boxA antiterminator sequence of the ribosomal RNA (rrn) operons. This chain is Transcription antitermination protein NusB, found in Colwellia psychrerythraea (strain 34H / ATCC BAA-681) (Vibrio psychroerythus).